Reading from the N-terminus, the 2465-residue chain is Highly reducing polyketide synthase milA (2465 aa).

Residues 1–434 (MEPIAIVGSA…GANCHVILEG (434 aa)) enclose the Ketosynthase family 3 (KS3) domain. Catalysis depends on for beta-ketoacyl synthase activity residues C172, H311, and H355. The disordered stretch occupies residues 450 to 476 (KPSLSSSPSLSPTSTSPPTPRTPANSL). Residues 451–463 (PSLSSSPSLSPTS) show a composition bias toward low complexity. The tract at residues 567-888 (VFTGQGAQWA…CGTLSRAVDD (322 aa)) is malonyl-CoA:ACP transacylase (MAT) domain. The tract at residues 957–1096 (HPLLGVRTNT…GKVQLFVGGD (140 aa)) is N-terminal hotdog fold. A dehydratase (DH) domain region spans residues 957-1265 (HPLLGVRTNT…LTVSPVAPVT (309 aa)). The PKS/mFAS DH domain maps to 957–1267 (HPLLGVRTNT…VSPVAPVTAD (311 aa)). The active-site Proton acceptor; for dehydratase activity is H989. The C-terminal hotdog fold stretch occupies residues 1111 to 1267 (LNEIDVDTFY…VSPVAPVTAD (157 aa)). D1174 serves as the catalytic Proton donor; for dehydratase activity. The interval 1334–1367 (HSTNGLTNGHASTNGHGSTNGHISTNGHSTNGDV) is disordered. Residues 2095–2269 (TYFLVGMAGS…AASVINLTGV (175 aa)) are ketoreductase (KR)domain. The 76-residue stretch at 2384–2459 (DMIFRAFQTV…QVVWSVVHQI (76 aa)) folds into the Carrier domain. S2419 is modified (O-(pantetheine 4'-phosphoryl)serine).

Requires pantetheine 4'-phosphate as cofactor.

It carries out the reaction 10 malonyl-CoA + acetyl-CoA + 3 AH2 + 8 NADPH + 18 H(+) = cordypyrone A + 3 A + 10 CO2 + 8 NADP(+) + 11 CoA + 8 H2O. It participates in secondary metabolite biosynthesis. Its function is as follows. Highly reducing polyketide synthase (HR-PKS); part of the gene cluster that mediates the biosynthesis of cordypyrones A and B, 2 pyrones that show modest activities against pathogenic bacteria including methicillin-resistant Staphylococcus aureus (MRSA), Mycobacterium tuberculosis and Bacillus cereus. The HR-PKS milA catalyzes the formation of cordypyrones A via condensation of one acetate with 10 malonate units. Since milA lacks an enoyl reductase domain, the 2 beta-keto processing domains DH and KR of milA collaborate with the trans-enoyl reductase milB to catalyze the different levels of reduction. The cytochrome P450 monooxygenase milC then hydroxylates the C-22 of cordypyrones A to yield cordypyrones B. The polypeptide is Highly reducing polyketide synthase milA (Cordyceps militaris (strain CM01) (Caterpillar fungus)).